A 408-amino-acid polypeptide reads, in one-letter code: MAENFMVVDGGVVAPKGFKANGHKDRKYGAALIYSETDAVAAGVFTTNKVFAHPVALSKDVLVNNNVFRAIVANSGNANCFTKGGMEDAKALVKKAADLLKIPENQVLSASTGVIGRRMPMDIITIEVERAFKNMNLENSNENASKAIMTTDAFPKTVAVEFEINGKNVRIGGIAKGAGMIAPNMLHATMLGFITTDIEISKEELTDSLQKATDESFNNAVVDGDMSTNDTVYVLANAQSGVKYTDCKADFDGALAYVSKELAKMIVSDGEGAKKLIEATVHGAETKEDAKKASMSIVRSLLLKTAVFGADPNWGRIAAAVGYSGAEMDMANFDIIISDISLENQAFLVKAGEQIADCGTPELKLAEEIMKEDKIKIIVDLKMGSFENTAFGCDLGYEYVRINSEYTT.

Substrate contacts are provided by Thr-150, Lys-176, Thr-189, Glu-271, Asn-403, and Thr-408. Catalysis depends on Thr-189, which acts as the Nucleophile.

This sequence belongs to the ArgJ family. Heterotetramer of two alpha and two beta chains.

The protein resides in the cytoplasm. It catalyses the reaction N(2)-acetyl-L-ornithine + L-glutamate = N-acetyl-L-glutamate + L-ornithine. Its pathway is amino-acid biosynthesis; L-arginine biosynthesis; L-ornithine and N-acetyl-L-glutamate from L-glutamate and N(2)-acetyl-L-ornithine (cyclic): step 1/1. Catalyzes the transfer of the acetyl group from N(2)-acetylornithine to glutamate, forming N-acetylglutamate and L-ornithine. This Methanococcus maripaludis (strain C6 / ATCC BAA-1332) protein is Glutamate N-acetyltransferase.